We begin with the raw amino-acid sequence, 179 residues long: Large ribosomal subunit protein uL5 (179 aa).

It belongs to the universal ribosomal protein uL5 family. In terms of assembly, part of the 50S ribosomal subunit; part of the 5S rRNA/L5/L18/L25 subcomplex. Contacts the 5S rRNA and the P site tRNA. Forms a bridge to the 30S subunit in the 70S ribosome.

In terms of biological role, this is one of the proteins that bind and probably mediate the attachment of the 5S RNA into the large ribosomal subunit, where it forms part of the central protuberance. In the 70S ribosome it contacts protein S13 of the 30S subunit (bridge B1b), connecting the 2 subunits; this bridge is implicated in subunit movement. Contacts the P site tRNA; the 5S rRNA and some of its associated proteins might help stabilize positioning of ribosome-bound tRNAs. This Pectobacterium carotovorum subsp. carotovorum (strain PC1) protein is Large ribosomal subunit protein uL5.